The primary structure comprises 364 residues: Aminomethyltransferase (364 aa).

It belongs to the GcvT family. As to quaternary structure, the glycine cleavage system is composed of four proteins: P, T, L and H.

It carries out the reaction N(6)-[(R)-S(8)-aminomethyldihydrolipoyl]-L-lysyl-[protein] + (6S)-5,6,7,8-tetrahydrofolate = N(6)-[(R)-dihydrolipoyl]-L-lysyl-[protein] + (6R)-5,10-methylene-5,6,7,8-tetrahydrofolate + NH4(+). Its function is as follows. The glycine cleavage system catalyzes the degradation of glycine. This Shewanella putrefaciens (strain CN-32 / ATCC BAA-453) protein is Aminomethyltransferase.